The chain runs to 156 residues: ATP synthase subunit b (156 aa).

The helical transmembrane segment at 7–27 threads the bilayer; that stretch reads LIGQTVAFIIFVWFCMKFVWP.

This sequence belongs to the ATPase B chain family. In terms of assembly, F-type ATPases have 2 components, F(1) - the catalytic core - and F(0) - the membrane proton channel. F(1) has five subunits: alpha(3), beta(3), gamma(1), delta(1), epsilon(1). F(0) has three main subunits: a(1), b(2) and c(10-14). The alpha and beta chains form an alternating ring which encloses part of the gamma chain. F(1) is attached to F(0) by a central stalk formed by the gamma and epsilon chains, while a peripheral stalk is formed by the delta and b chains.

It localises to the cell inner membrane. In terms of biological role, f(1)F(0) ATP synthase produces ATP from ADP in the presence of a proton or sodium gradient. F-type ATPases consist of two structural domains, F(1) containing the extramembraneous catalytic core and F(0) containing the membrane proton channel, linked together by a central stalk and a peripheral stalk. During catalysis, ATP synthesis in the catalytic domain of F(1) is coupled via a rotary mechanism of the central stalk subunits to proton translocation. Functionally, component of the F(0) channel, it forms part of the peripheral stalk, linking F(1) to F(0). In Shewanella sp. (strain MR-4), this protein is ATP synthase subunit b.